Consider the following 478-residue polypeptide: Cytochrome c-552 (478 aa).

The signal sequence occupies residues 1–26 (MTRIKINARRIFSLLIPFFFFTSVHA). Histidine 94 serves as a coordination point for heme c. The heme site is built by cysteine 122, cysteine 125, and lysine 126. 6 residues coordinate heme c: cysteine 160, cysteine 163, histidine 164, cysteine 209, cysteine 212, and histidine 213. Ca(2+) is bound by residues glutamate 215, tyrosine 216, lysine 261, and glutamine 263. Tyrosine 216 provides a ligand contact to substrate. Histidine 264 serves as a coordination point for substrate. 9 residues coordinate heme c: histidine 275, cysteine 282, cysteine 285, histidine 286, histidine 301, cysteine 314, cysteine 317, histidine 318, and histidine 393.

It belongs to the cytochrome c-552 family. Requires Ca(2+) as cofactor. Heme c serves as cofactor.

Its subcellular location is the periplasm. The catalysed reaction is 6 Fe(III)-[cytochrome c] + NH4(+) + 2 H2O = 6 Fe(II)-[cytochrome c] + nitrite + 8 H(+). The protein operates within nitrogen metabolism; nitrate reduction (assimilation). Catalyzes the reduction of nitrite to ammonia, consuming six electrons in the process. The polypeptide is Cytochrome c-552 (Escherichia coli O9:H4 (strain HS)).